The primary structure comprises 108 residues: UPF0060 membrane protein CKO_01576 (108 aa).

Transmembrane regions (helical) follow at residues 6 to 26 (LLFFMTALCEIVGCFLPWLWL), 29 to 49 (GATAWLLVPAGVSLALFVWLL), 61 to 81 (AAYGGVYVCTALLWLRFVDGV), and 85 to 105 (LYDWSGALIALCGMLIIVAGW).

The protein belongs to the UPF0060 family.

It localises to the cell inner membrane. This Citrobacter koseri (strain ATCC BAA-895 / CDC 4225-83 / SGSC4696) protein is UPF0060 membrane protein CKO_01576.